Here is a 159-residue protein sequence, read N- to C-terminus: Cyclic pyranopterin monophosphate synthase (159 aa).

Residues 75 to 77 and 113 to 114 contribute to the substrate site; these read LCH and ME. D128 is an active-site residue.

The protein belongs to the MoaC family. In terms of assembly, homohexamer; trimer of dimers.

It catalyses the reaction (8S)-3',8-cyclo-7,8-dihydroguanosine 5'-triphosphate = cyclic pyranopterin phosphate + diphosphate. It participates in cofactor biosynthesis; molybdopterin biosynthesis. Functionally, catalyzes the conversion of (8S)-3',8-cyclo-7,8-dihydroguanosine 5'-triphosphate to cyclic pyranopterin monophosphate (cPMP). The polypeptide is Cyclic pyranopterin monophosphate synthase (Photorhabdus laumondii subsp. laumondii (strain DSM 15139 / CIP 105565 / TT01) (Photorhabdus luminescens subsp. laumondii)).